Consider the following 764-residue polypeptide: 1,4-alpha-glucan branching enzyme GlgB (764 aa).

Asp-434 acts as the Nucleophile in catalysis. Glu-487 functions as the Proton donor in the catalytic mechanism.

The protein belongs to the glycosyl hydrolase 13 family. GlgB subfamily. In terms of assembly, monomer.

It catalyses the reaction Transfers a segment of a (1-&gt;4)-alpha-D-glucan chain to a primary hydroxy group in a similar glucan chain.. Its pathway is glycan biosynthesis; glycogen biosynthesis. In terms of biological role, catalyzes the formation of the alpha-1,6-glucosidic linkages in glycogen by scission of a 1,4-alpha-linked oligosaccharide from growing alpha-1,4-glucan chains and the subsequent attachment of the oligosaccharide to the alpha-1,6 position. In Trichormus variabilis (strain ATCC 29413 / PCC 7937) (Anabaena variabilis), this protein is 1,4-alpha-glucan branching enzyme GlgB.